The sequence spans 236 residues: Flagellar L-ring protein (236 aa).

The signal sequence occupies residues 1-16 (MRMQLTAVLAASLLAG). C17 is lipidated: N-palmitoyl cysteine. The S-diacylglycerol cysteine moiety is linked to residue C17.

The protein belongs to the FlgH family. In terms of assembly, the basal body constitutes a major portion of the flagellar organelle and consists of four rings (L,P,S, and M) mounted on a central rod.

It localises to the cell outer membrane. Its subcellular location is the bacterial flagellum basal body. Its function is as follows. Assembles around the rod to form the L-ring and probably protects the motor/basal body from shearing forces during rotation. The polypeptide is Flagellar L-ring protein (Sinorhizobium fredii (strain NBRC 101917 / NGR234)).